The primary structure comprises 548 residues: Leucine-rich repeat LGI family member 3 (548 aa).

The signal sequence occupies residues 1–30; the sequence is MAGLRARRGPGRRLLVLSTLGFCLMLQVSA. Positions 31–64 constitute an LRRNT domain; the sequence is KRPPKTPPCPPSCSCTRDTAFCVDSKSVPKNLPS. LRR repeat units follow at residues 89–110, 113–134, and 137–158; these read LLQFLLLNSNKFTLIGDNAFIG, HLQYLFIENNDIWALSKFTFRG, and SLTHLSLANNNLQTLPRDIFRP. Positions 170 to 220 constitute an LRRCT domain; it reads NALNCDCKVKWLVEWLAHTNTTVAPIYCASPPRFQEHKVQDLPLREFDCIT. Asn189 carries an N-linked (GlcNAc...) asparagine glycan. EAR repeat units lie at residues 222–264 and 268–310; these read DFVL…KWDY and QLRD…HWDP. Asn311 carries N-linked (GlcNAc...) asparagine glycosylation. EAR repeat units follow at residues 314–361, 363–406, 410–453, 455–497, and 501–543; these read RFTK…RWHQ, GFYS…QWSR, QFVA…RWEG, RFSE…QWDE, and KFVR…RHVV.

Interacts with STX1A. Brain.

The protein resides in the secreted. It localises to the cytoplasmic vesicle. It is found in the secretory vesicle. Its subcellular location is the synaptic vesicle. The protein localises to the synapse. The protein resides in the synaptosome. It localises to the cell projection. It is found in the axon. May participate in the regulation of neuronal exocytosis. The chain is Leucine-rich repeat LGI family member 3 (Lgi3) from Mus musculus (Mouse).